Consider the following 294-residue polypeptide: 2,4-diacetylphloroglucinol hydrolase (294 aa).

Residues histidine 129, glutamate 160, histidine 270, and glutamate 274 each contribute to the Zn(2+) site.

Belongs to the DAPG/phloretin hydrolase family. Homodimer. Zn(2+) is required as a cofactor.

It carries out the reaction 2,4-diacetylphloroglucinol + H2O = 2-acetylphloroglucinol + acetate. Its activity is regulated as follows. Specifically and significantly activated by CoCl(2). Competitively inhibited by MAPG, but not by 2-hydroxy- and 4-hydroxyacetophenone. Its function is as follows. Hydrolase that specifically degrades the potent antimicrobial compound 2,4-diacetylphloroglucinol (DAPG) to equimolar amounts of mildly toxic monoacetylphloroglucinol (MAPG) and acetate. This chain is 2,4-diacetylphloroglucinol hydrolase, found in Pseudomonas sp.